A 296-amino-acid polypeptide reads, in one-letter code: 4-hydroxybenzoate octaprenyltransferase (296 aa).

Helical transmembrane passes span 29 to 49 (IGVYLLLWPTLWAVWIAGKGA), 52 to 72 (LQTVCIFVLGVFLMRAAGCVI), 102 to 122 (ALVLFAVLVGLSFVLVLFTNA), 146 to 166 (YYPQVVLGAAFSWGMPMAFTA), 169 to 189 (GELPAAAWLLYIANLLWTVGY), 219 to 239 (VIILTLQGLALGCLMLAGARF), 241 to 261 (LGACFYIGLLAAAGCFAWEFW), and 275 to 295 (FLHNHWAGLAIFLGIVADYAV).

It belongs to the UbiA prenyltransferase family. Mg(2+) is required as a cofactor.

The protein localises to the cell inner membrane. It catalyses the reaction all-trans-octaprenyl diphosphate + 4-hydroxybenzoate = 4-hydroxy-3-(all-trans-octaprenyl)benzoate + diphosphate. Its pathway is cofactor biosynthesis; ubiquinone biosynthesis. Its function is as follows. Catalyzes the prenylation of para-hydroxybenzoate (PHB) with an all-trans polyprenyl group. Mediates the second step in the final reaction sequence of ubiquinone-8 (UQ-8) biosynthesis, which is the condensation of the polyisoprenoid side chain with PHB, generating the first membrane-bound Q intermediate 3-octaprenyl-4-hydroxybenzoate. This chain is 4-hydroxybenzoate octaprenyltransferase, found in Pseudomonas syringae pv. syringae (strain B728a).